The primary structure comprises 239 residues: MSKAQTLSAADRAKLESLIGHDFAEKERLDRALTHASARTEKGSNYERLEFLGDRVLGLCIAELLFRTFGTAGEGELSVRLNQLVSAETCAAVADELNLHLYIRTGADVKKLTGKRMMNVRADVVESLIAAIYLDGGLEVARRFILRYWQGRAVRADGAKRDAKTELQEWSHAKFGVTPLYRVDERSGPDHDPRFKVTVEVAGIKPETGVERSKRAAEQVAATKMLEREGIWQQSPAGN.

In terms of domain architecture, RNase III spans 12 to 137 (RAKLESLIGH…LIAAIYLDGG (126 aa)). Glu50 is a Mg(2+) binding site. The active site involves Asp54. Residues Asp123 and Glu126 each coordinate Mg(2+). Glu126 is a catalytic residue. The DRBM domain maps to 162–231 (DAKTELQEWS…ATKMLEREGI (70 aa)).

Belongs to the ribonuclease III family. As to quaternary structure, homodimer. Mg(2+) is required as a cofactor.

It localises to the cytoplasm. The catalysed reaction is Endonucleolytic cleavage to 5'-phosphomonoester.. Functionally, digests double-stranded RNA. Involved in the processing of primary rRNA transcript to yield the immediate precursors to the large and small rRNAs (23S and 16S). Processes some mRNAs, and tRNAs when they are encoded in the rRNA operon. Processes pre-crRNA and tracrRNA of type II CRISPR loci if present in the organism. In Rhizobium etli (strain CIAT 652), this protein is Ribonuclease 3.